We begin with the raw amino-acid sequence, 306 residues long: UDP-N-acetylenolpyruvoylglucosamine reductase (306 aa).

Residues 34–198 (VGGPADLLIT…LEVTFKLHNS (165 aa)) enclose the FAD-binding PCMH-type domain. R177 is a catalytic residue. S227 acts as the Proton donor in catalysis. E297 is an active-site residue.

The protein belongs to the MurB family. It depends on FAD as a cofactor.

It localises to the cytoplasm. It carries out the reaction UDP-N-acetyl-alpha-D-muramate + NADP(+) = UDP-N-acetyl-3-O-(1-carboxyvinyl)-alpha-D-glucosamine + NADPH + H(+). Its pathway is cell wall biogenesis; peptidoglycan biosynthesis. Cell wall formation. This is UDP-N-acetylenolpyruvoylglucosamine reductase from Clostridium botulinum (strain ATCC 19397 / Type A).